The primary structure comprises 234 residues: Adenylate dimethylallyltransferase (234 aa).

Belongs to the isopentenyl transferase family.

The catalysed reaction is dimethylallyl diphosphate + AMP = N(6)-(dimethylallyl)adenosine 5'-phosphate + diphosphate. Its function is as follows. Transfers dimethylallyl groups to AMP as part of the biosynthesis of cytokinin phytohormones. In Pseudomonas savastanoi (Pseudomonas syringae pv. savastanoi), this protein is Adenylate dimethylallyltransferase (ptz).